The sequence spans 54 residues: Large ribosomal subunit protein bL33B (54 aa).

It belongs to the bacterial ribosomal protein bL33 family.

This Mycobacterium sp. (strain KMS) protein is Large ribosomal subunit protein bL33B.